The following is a 601-amino-acid chain: Pyranose 2-oxidase (601 aa).

His-151 carries the post-translational modification Tele-8alpha-FAD histidine. Residues Gln-406 and His-408 each coordinate substrate. The active-site Proton acceptor is His-505. Asn-558 is a catalytic residue. Positions 577–601 (KLGKKGSHSGNRDDGDVDTDTDDDA) are disordered. Residues 591–601 (GDVDTDTDDDA) show a composition bias toward acidic residues.

The protein belongs to the GMC oxidoreductase family. Homotetramer. It depends on FAD as a cofactor.

It carries out the reaction D-glucose + O2 = 2-dehydro-D-glucose + H2O2. Its function is as follows. Catalyzes the oxidation of various aldopyranoses and disaccharides on carbon-2 to the corresponding 2-keto sugars concomitant with the reduction of O(2) to H(2)O(2). This is Pyranose 2-oxidase (p2ox) from Emericella nidulans (strain FGSC A4 / ATCC 38163 / CBS 112.46 / NRRL 194 / M139) (Aspergillus nidulans).